The sequence spans 414 residues: Cytochrome P450 CYP105Q4 (414 aa).

The span at 1–12 (MSDTLASPSPET) shows a compositional bias: polar residues. Residues 1–21 (MSDTLASPSPETASGIPDYPM) are disordered. Heme contacts are provided by His-108, Gln-302, Arg-304, His-361, and Cys-363.

This sequence belongs to the cytochrome P450 family. The cofactor is heme.

In terms of biological role, can bind oleic-acid derivatives, amphotericin B like precursors and a variety of nitrogen ligand donors. The protein is Cytochrome P450 CYP105Q4 of Mycobacterium marinum (strain ATCC BAA-535 / M).